Consider the following 537-residue polypeptide: Chaperonin GroEL (537 aa).

ATP is bound by residues 29 to 32 (TLGP), 86 to 90 (DGTTT), glycine 413, and aspartate 492.

The protein belongs to the chaperonin (HSP60) family. Forms a cylinder of 14 subunits composed of two heptameric rings stacked back-to-back. Interacts with the co-chaperonin GroES.

Its subcellular location is the cytoplasm. The enzyme catalyses ATP + H2O + a folded polypeptide = ADP + phosphate + an unfolded polypeptide.. In terms of biological role, together with its co-chaperonin GroES, plays an essential role in assisting protein folding. The GroEL-GroES system forms a nano-cage that allows encapsulation of the non-native substrate proteins and provides a physical environment optimized to promote and accelerate protein folding. The protein is Chaperonin GroEL of Dehalococcoides mccartyi (strain ATCC BAA-2100 / JCM 16839 / KCTC 5957 / BAV1).